A 163-amino-acid chain; its full sequence is Norbelladine synthase (163 aa).

68–71 (YHKE) contacts tyramine. Lys-83 (proton donor) is an active-site residue.

This sequence belongs to the BetVI family. As to expression, mostly expressed in bulbs, and, to a lower extent, in roots, stems, leaves and flowers.

The catalysed reaction is 3,4-dihydroxybenzaldehyde + tyramine + AH2 = norbelladine + A + H2O. It functions in the pathway alkaloid biosynthesis. Functionally, catalyzes the condensation of tyramine and 3,4-dihydroxybenzaldehyde (3,4-DHBA) to form norbelladine, the common precursor to all Amaryllidaceae alkaloids such as galanthamine, lycorine and haemanthamine, and including haemanthamine- and crinamine-type alkaloids, promising anticancer agents. This is Norbelladine synthase from Narcissus pseudonarcissus (Daffodil).